Here is a 76-residue protein sequence, read N- to C-terminus: ATP synthase subunit 9, mitochondrial (76 aa).

An N-formylmethionine modification is found at M1. Helical transmembrane passes span I14–I34 and I52–L72.

It belongs to the ATPase C chain family. F-type ATPases have 2 components, CF(1) - the catalytic core - and CF(0) - the membrane proton channel. In yeast, the dimeric form of ATP synthase consists of 18 polypeptides: alpha, beta, gamma, delta, epsilon, 4 (B), 5 (OSCP), 6 (A), 8, 9 (C), d, E (Tim11), f, g, h, i, j and k.

It localises to the mitochondrion membrane. Functionally, mitochondrial membrane ATP synthase (F(1)F(0) ATP synthase or Complex V) produces ATP from ADP in the presence of a proton gradient across the membrane which is generated by electron transport complexes of the respiratory chain. F-type ATPases consist of two structural domains, F(1) - containing the extramembraneous catalytic core and F(0) - containing the membrane proton channel, linked together by a central stalk and a peripheral stalk. During catalysis, ATP synthesis in the catalytic domain of F(1) is coupled via a rotary mechanism of the central stalk subunits to proton translocation. Part of the complex F(0) domain. A homomeric c-ring of probably 10 subunits is part of the complex rotary element. The protein is ATP synthase subunit 9, mitochondrial (ATP9) of Saccharomyces paradoxus (Yeast).